Consider the following 153-residue polypeptide: Cofilin (153 aa).

An ADF-H domain is found at 15 to 147 (GVAVNDSALQ…AYESVLERVS (133 aa)).

Belongs to the actin-binding proteins ADF family.

The protein localises to the cytoplasm. Its subcellular location is the cytoskeleton. It is found in the nucleus matrix. In terms of biological role, controls reversibly actin polymerization and depolymerization in a pH-sensitive manner. It has the ability to bind G- and F-actin in a 1:1 ratio of cofilin to actin. Binding to F-actin is regulated by tropomyosin. It is the major component of intranuclear and cytoplasmic actin rods. Required for accumulation of actin at the cell division site via depolymerizing actin at the cell ends. In association with myosin II has a role in the assembly of the contractile ring via severing actin filaments. Involved in the maintenance of the contractile ring once formed. In association with profilin and capping protein, has a role in the mitotic reorganization of the actin cytoskeleton. This chain is Cofilin (COF1), found in Yarrowia lipolytica (strain CLIB 122 / E 150) (Yeast).